A 283-amino-acid chain; its full sequence is MTATIIDGKETAREKREQLAKEVEELKKQGVTPGLAVILIGDDPASHSYVRGKKKAAETMGMNFKLDQFDSSLTEAELLSIIDQYNQDPEFHGILVQLPLPDHISEKAVIERISPDKDVDGFHPLNVGKMLLGEDTFLPCTPHGIVELLKKTNIDLSGKEVVVVGRSNIVGKPVGQLLLNENATVTYCHSRTENITEHTKKADILVVAVGRANFISADQIKEGAVVIDVGVNRLENGKLCGDVEFEGAKEKASFITPVPGGVGPMTITMLAHNTVKSAKRTLS.

Residues glycine 165 to serine 167, serine 190, and valine 231 each bind NADP(+).

The protein belongs to the tetrahydrofolate dehydrogenase/cyclohydrolase family. In terms of assembly, homodimer. Interacts with BrxC.

It carries out the reaction (6R)-5,10-methylene-5,6,7,8-tetrahydrofolate + NADP(+) = (6R)-5,10-methenyltetrahydrofolate + NADPH. The catalysed reaction is (6R)-5,10-methenyltetrahydrofolate + H2O = (6R)-10-formyltetrahydrofolate + H(+). It participates in one-carbon metabolism; tetrahydrofolate interconversion. Its function is as follows. Catalyzes the oxidation of 5,10-methylenetetrahydrofolate to 5,10-methenyltetrahydrofolate and then the hydrolysis of 5,10-methenyltetrahydrofolate to 10-formyltetrahydrofolate. The polypeptide is Bifunctional protein FolD (Bacillus subtilis (strain 168)).